Consider the following 540-residue polypeptide: Phosphoenolpyruvate carboxykinase (ATP) (540 aa).

A substrate-binding site is contributed by Arg65. Lys87 is subject to N6-acetyllysine. Substrate is bound by residues Tyr207 and Lys213. Residues Lys213, His232, and 248–256 (GLSGTGKTT) contribute to the ATP site. The Mn(2+) site is built by Lys213 and His232. Asp269 is a Mn(2+) binding site. Residues Glu297, Arg333, 449–450 (RI), and Thr455 each bind ATP. Arg333 provides a ligand contact to substrate. Lys523 bears the N6-acetyllysine mark.

The protein belongs to the phosphoenolpyruvate carboxykinase (ATP) family. In terms of assembly, monomer. Requires Mn(2+) as cofactor.

It is found in the cytoplasm. The catalysed reaction is oxaloacetate + ATP = phosphoenolpyruvate + ADP + CO2. It participates in carbohydrate biosynthesis; gluconeogenesis. In terms of biological role, involved in the gluconeogenesis. Catalyzes the conversion of oxaloacetate (OAA) to phosphoenolpyruvate (PEP) through direct phosphoryl transfer between the nucleoside triphosphate and OAA. The chain is Phosphoenolpyruvate carboxykinase (ATP) from Escherichia coli O127:H6 (strain E2348/69 / EPEC).